Consider the following 711-residue polypeptide: DNA topoisomerase 3 (711 aa).

The Toprim domain maps to 2–135; the sequence is KSLILAEKPS…LRRLWISSVT (134 aa). Mg(2+) contacts are provided by E8 and D104. A Topo IA-type catalytic domain is found at 152 to 580; the sequence is YNDLYYAALA…EMKDFTKDVV (429 aa). An interaction with DNA region spans residues 186 to 191; the sequence is SLGRVQ. The active-site O-(5'-phospho-DNA)-tyrosine intermediate is Y305. Positions 691–711 are disordered; it reads MNKNEGLDNNPFKDALKNLNL.

Belongs to the type IA topoisomerase family. It depends on Mg(2+) as a cofactor.

It carries out the reaction ATP-independent breakage of single-stranded DNA, followed by passage and rejoining.. Functionally, releases the supercoiling and torsional tension of DNA, which is introduced during the DNA replication and transcription, by transiently cleaving and rejoining one strand of the DNA duplex. Introduces a single-strand break via transesterification at a target site in duplex DNA. The scissile phosphodiester is attacked by the catalytic tyrosine of the enzyme, resulting in the formation of a DNA-(5'-phosphotyrosyl)-enzyme intermediate and the expulsion of a 3'-OH DNA strand. The free DNA strand then undergoes passage around the unbroken strand, thus removing DNA supercoils. Finally, in the religation step, the DNA 3'-OH attacks the covalent intermediate to expel the active-site tyrosine and restore the DNA phosphodiester backbone. The protein is DNA topoisomerase 3 of Staphylococcus aureus (strain MRSA252).